Here is a 327-residue protein sequence, read N- to C-terminus: Aldo-keto reductase family 7 member A3 (327 aa).

Residue S2 is modified to Phosphoserine. NADP(+)-binding residues include M13, R18, and D40. The Proton donor role is filled by Y45. H109 lines the citrate pocket. The NADP(+) site is built by N140, N194, L196, G198, R204, and R218. Citrate is bound by residues Y228 and R231. Residues S286, Q290, Q293, N294, and R327 each coordinate NADP(+).

Belongs to the aldo/keto reductase family. Aldo/keto reductase 2 subfamily. As to quaternary structure, homodimer. Heterodimer with AKR7A2.

It is found in the cytoplasm. The catalysed reaction is a primary alcohol + NADP(+) = an aldehyde + NADPH + H(+). It carries out the reaction aflatoxin B1 dialdehyde + NADPH + H(+) = aflatoxin B1 C(6a)-monoaldehyde + NADP(+). It catalyses the reaction aflatoxin B1 dialdehyde + NADPH + H(+) = aflatoxin B1 C(8)-monoaldehyde + NADP(+). The enzyme catalyses aflatoxin B1 C(6a)-monoaldehyde + NADPH + 2 H(+) = aflatoxin B1 triol + NADP(+). With respect to regulation, inhibited by citrate. Functionally, catalyzes the NADPH-dependent reduction of various carbonyl-containing compounds, including aldehydes, ketones, and toxic products from cellular metabolism or environmental exposure. Can reduce the dialdehyde form of aflatoxin B1 (AFB1) into alcohol derivatives, via monoaldehydes intermediates, thus preventing the formation of protein adducts that contribute to AFB1-induced toxicity. In Rattus norvegicus (Rat), this protein is Aldo-keto reductase family 7 member A3.